Here is a 427-residue protein sequence, read N- to C-terminus: Flotillin-1 (427 aa).

3 positions are modified to phosphoserine: S19, S163, and S385.

This sequence belongs to the band 7/mec-2 family. Flotillin subfamily. In terms of assembly, heterooligomeric complex of flotillin-1 and flotillin-2 and caveolin-1 and caveolin-2. Interacts with ECPAS.

Its subcellular location is the cell membrane. It is found in the endosome. The protein resides in the membrane. The protein localises to the caveola. It localises to the melanosome. Its subcellular location is the membrane raft. In terms of biological role, may act as a scaffolding protein within caveolar membranes, functionally participating in formation of caveolae or caveolae-like vesicles. The chain is Flotillin-1 (FLOT1) from Bos taurus (Bovine).